Reading from the N-terminus, the 271-residue chain is tRNA pseudouridine synthase A (271 aa).

The active-site Nucleophile is D56. Y120 provides a ligand contact to substrate.

Belongs to the tRNA pseudouridine synthase TruA family. As to quaternary structure, homodimer.

It carries out the reaction uridine(38/39/40) in tRNA = pseudouridine(38/39/40) in tRNA. Formation of pseudouridine at positions 38, 39 and 40 in the anticodon stem and loop of transfer RNAs. The polypeptide is tRNA pseudouridine synthase A (Janthinobacterium sp. (strain Marseille) (Minibacterium massiliensis)).